The sequence spans 2184 residues: Genome polyprotein (2184 aa).

Gly2 carries the N-myristoyl glycine; by host lipid modification. Residues 2-1494 (GAQVSTQKTG…HVSRAFICLQ (1493 aa)) lie on the Cytoplasmic side of the membrane. The segment at 566–582 (FYQSPVEGAIERAIARV) is amphipathic alpha-helix. Catalysis depends on for protease 2A activity residues His871 and Asp889. Zn(2+) is bound by residues Cys906 and Cys908. Cys960 functions as the For protease 2A activity in the catalytic mechanism. Zn(2+) contacts are provided by Cys966 and His968. Residues 1100–1172 (SNGWLKKFTE…EQSAPSQSDQ (73 aa)) form a membrane-binding region. An oligomerization region spans residues 1100 to 1238 (SNGWLKKFTE…SPGAGKSVAT (139 aa)). The segment at 1121–1125 (AIKIQ) is RNA-binding. The SF3 helicase domain maps to 1204–1360 (EKKMSNYIQF…SMYSQNGKIN (157 aa)). Residues Cys1368, Cys1380, and Cys1385 each coordinate Zn(2+). The C4-type; degenerate zinc-finger motif lies at 1368-1385 (CDEECCPVNFKKCCPLVC). Residues 1412–1419 (EYNHRHSV) form an RNA-binding region. The tract at residues 1423 to 1428 (LEALFQ) is oligomerization. The stretch at 1495–1510 (ALTTFVSVAGIIYIIY) is an intramembrane region. The Cytoplasmic segment spans residues 1511–2184 (KLFAGFQGAY…TLRRKWLDSF (674 aa)). Position 1520 is an O-(5'-phospho-RNA)-tyrosine (Tyr1520). The Peptidase C3 domain occupies 1540–1718 (GPAFEFAVAM…FSAALLKHYF (179 aa)). Catalysis depends on for protease 3C activity residues His1579, Glu1610, and Cys1686. Positions 1949–2065 (GHLIAFDYSG…SYPWPIDASL (117 aa)) constitute a RdRp catalytic domain. 2 residues coordinate Mg(2+): Asp1955 and Asp2051.

The protein belongs to the picornaviruses polyprotein family. Interacts with capsid protein VP1 and capsid protein VP3 to form heterotrimeric protomers. In terms of assembly, interacts with capsid protein VP0, and capsid protein VP3 to form heterotrimeric protomers. Five protomers subsequently associate to form pentamers which serve as building blocks for the capsid. Interacts with capsid protein VP2, capsid protein VP3 and capsid protein VP4 following cleavage of capsid protein VP0. Interacts with host CXADR. As to quaternary structure, interacts with capsid protein VP1 and capsid protein VP3 in the mature capsid. Interacts with capsid protein VP0 and capsid protein VP1 to form heterotrimeric protomers. Five protomers subsequently associate to form pentamers which serve as building blocks for the capsid. Interacts with capsid protein VP4 in the mature capsid. Interacts with protein 2C; this interaction may be important for virion morphogenesis. In terms of assembly, interacts with capsid protein VP1 and capsid protein VP3. As to quaternary structure, homodimer. Homohexamer; forms a hexameric ring structure with 6-fold symmetry characteristic of AAA+ ATPases. Interacts (via N-terminus) with host RTN3 (via reticulon domain); this interaction is important for viral replication. Interacts with capsid protein VP3; this interaction may be important for virion morphogenesis. In terms of assembly, interacts with protein 3CD. As to quaternary structure, homodimer. Interacts with host GBF1. Interacts (via GOLD domain) with host ACBD3 (via GOLD domain); this interaction allows the formation of a viral protein 3A/ACBD3 heterotetramer with a 2:2 stoichiometry, which will stimulate the recruitment of host PI4KB in order to synthesize PI4P at the viral RNA replication sites. Interacts with RNA-directed RNA polymerase. In terms of assembly, interacts with protein 3AB and with RNA-directed RNA polymerase. As to quaternary structure, interacts with Viral protein genome-linked and with protein 3CD. Mg(2+) is required as a cofactor. In terms of processing, specific enzymatic cleavages in vivo by the viral proteases yield processing intermediates and the mature proteins. Myristoylation is required for the formation of pentamers during virus assembly. Further assembly of 12 pentamers and a molecule of genomic RNA generates the provirion. Post-translationally, during virion maturation, immature virions are rendered infectious following cleavage of VP0 into VP4 and VP2. This maturation seems to be an autocatalytic event triggered by the presence of RNA in the capsid and it is followed by a conformational change infectious virion. In terms of processing, myristoylation is required during RNA encapsidation and formation of the mature virus particle. VPg is uridylylated by the polymerase into VPg-pUpU. This acts as a nucleotide-peptide primer for the genomic RNA replication.

It is found in the virion. Its subcellular location is the host cytoplasm. The protein localises to the host cytoplasmic vesicle membrane. The protein resides in the host nucleus. It carries out the reaction a ribonucleoside 5'-triphosphate + H2O = a ribonucleoside 5'-diphosphate + phosphate + H(+). The catalysed reaction is Selective cleavage of Tyr-|-Gly bond in the picornavirus polyprotein.. It catalyses the reaction RNA(n) + a ribonucleoside 5'-triphosphate = RNA(n+1) + diphosphate. The enzyme catalyses Selective cleavage of Gln-|-Gly bond in the poliovirus polyprotein. In other picornavirus reactions Glu may be substituted for Gln, and Ser or Thr for Gly.. Its activity is regulated as follows. Replication or transcription is subject to high level of random mutations by the nucleotide analog ribavirin. In terms of biological role, forms an icosahedral capsid of pseudo T=3 symmetry with capsid proteins VP2 and VP3. The capsid is 300 Angstroms in diameter, composed of 60 copies of each capsid protein and enclosing the viral positive strand RNA genome. Capsid protein VP1 mainly forms the vertices of the capsid. Capsid protein VP1 interacts with host CXADR to provide virion attachment to target host cells. This attachment induces virion internalization. Tyrosine kinases are probably involved in the entry process. After binding to its receptor, the capsid undergoes conformational changes. Capsid protein VP1 N-terminus (that contains an amphipathic alpha-helix) and capsid protein VP4 are externalized. Together, they shape a pore in the host membrane through which viral genome is translocated to host cell cytoplasm. Functionally, forms an icosahedral capsid of pseudo T=3 symmetry with capsid proteins VP2 and VP3. The capsid is 300 Angstroms in diameter, composed of 60 copies of each capsid protein and enclosing the viral positive strand RNA genome. Lies on the inner surface of the capsid shell. After binding to the host receptor, the capsid undergoes conformational changes. Capsid protein VP4 is released, Capsid protein VP1 N-terminus is externalized, and together, they shape a pore in the host membrane through which the viral genome is translocated into the host cell cytoplasm. Its function is as follows. Component of immature procapsids, which is cleaved into capsid proteins VP4 and VP2 after maturation. Allows the capsid to remain inactive before the maturation step. In terms of biological role, cysteine protease that cleaves viral polyprotein and specific host proteins. It is responsible for the autocatalytic cleavage between the P1 and P2 regions, which is the first cleavage occurring in the polyprotein. Also cleaves the host translation initiation factor EIF4G1, in order to shut down the capped cellular mRNA translation. Inhibits the host nucleus-cytoplasm protein and RNA trafficking by cleaving host members of the nuclear pores. Counteracts stress granule formation probably by antagonizing its assembly or promoting its dissassembly. Cleaves and inhibits host IFIH1/MDA5, thereby inhibiting the type-I IFN production and the establishment of the antiviral state. Cleaves and inhibits host MAVS, thereby inhibiting the type-I IFN production and the establishment of the antiviral state. Functionally, plays an essential role in the virus replication cycle by acting as a viroporin. Creates a pore in the host endoplasmic reticulum and as a consequence releases Ca2+ in the cytoplasm of infected cell. In turn, high levels of cytoplasmic calcium may trigger membrane trafficking and transport of viral ER-associated proteins to viroplasms, sites of viral genome replication. Induces and associates with structural rearrangements of intracellular membranes. Displays RNA-binding, nucleotide binding and NTPase activities. May play a role in virion morphogenesis and viral RNA encapsidation by interacting with the capsid protein VP3. Its function is as follows. Localizes the viral replication complex to the surface of membranous vesicles. Together with protein 3CD binds the Cis-Active RNA Element (CRE) which is involved in RNA synthesis initiation. Acts as a cofactor to stimulate the activity of 3D polymerase, maybe through a nucleid acid chaperone activity. In terms of biological role, localizes the viral replication complex to the surface of membranous vesicles. It inhibits host cell endoplasmic reticulum-to-Golgi apparatus transport and causes the disassembly of the Golgi complex, possibly through GBF1 interaction. This would result in depletion of MHC, trail receptors and IFN receptors at the host cell surface. Plays an essential role in viral RNA replication by recruiting ACBD3 and PI4KB at the viral replication sites, thereby allowing the formation of the rearranged membranous structures where viral replication takes place. Functionally, acts as a primer for viral RNA replication and remains covalently bound to viral genomic RNA. VPg is uridylylated prior to priming replication into VPg-pUpU. The oriI viral genomic sequence may act as a template for this. The VPg-pUpU is then used as primer on the genomic RNA poly(A) by the RNA-dependent RNA polymerase to replicate the viral genome. During genome replication, the VPg-RNA linkage is removed by the host TDP2, thereby accelerating replication. During the late stage of the replication cycle, host TDP2 is excluded from sites of viral RNA synthesis and encapsidation, allowing for the generation of progeny virions. Involved in the viral replication complex and viral polypeptide maturation. It exhibits protease activity with a specificity and catalytic efficiency that is different from protease 3C. Protein 3CD lacks polymerase activity. Protein 3CD binds to the 5'UTR of the viral genome. Its function is as follows. Replicates the viral genomic RNA on the surface of intracellular membranes. May form linear arrays of subunits that propagate along a strong head-to-tail interaction called interface-I. Covalently attaches UMP to a tyrosine of VPg, which is used to prime RNA synthesis. The positive stranded RNA genome is first replicated at virus induced membranous vesicles, creating a dsRNA genomic replication form. This dsRNA is then used as template to synthesize positive stranded RNA genomes. ss(+)RNA genomes are either translated, replicated or encapsidated. In terms of biological role, major viral protease that mediates proteolytic processing of the polyprotein. Cleaves host EIF5B, contributing to host translation shutoff. Also cleaves host PABPC1, contributing to host translation shutoff. Cleaves host NLRP1, triggers host N-glycine-mediated degradation of the autoinhibitory NLRP1 N-terminal fragment. This chain is Genome polyprotein, found in Coxsackievirus B6 (strain Schmitt).